The chain runs to 337 residues: Glyceraldehyde-3-phosphate dehydrogenase (337 aa).

NAD(+) contacts are provided by residues 11-12 (TI) and Gly110. 139-141 (SCN) lines the D-glyceraldehyde 3-phosphate pocket. Catalysis depends on Cys140, which acts as the Nucleophile. NAD(+) is bound at residue Arg168. 194–195 (HG) is a binding site for D-glyceraldehyde 3-phosphate. Residue Gln301 participates in NAD(+) binding.

This sequence belongs to the glyceraldehyde-3-phosphate dehydrogenase family. Homotetramer.

It localises to the cytoplasm. It catalyses the reaction D-glyceraldehyde 3-phosphate + phosphate + NADP(+) = (2R)-3-phospho-glyceroyl phosphate + NADPH + H(+). The enzyme catalyses D-glyceraldehyde 3-phosphate + phosphate + NAD(+) = (2R)-3-phospho-glyceroyl phosphate + NADH + H(+). It functions in the pathway carbohydrate degradation; glycolysis; pyruvate from D-glyceraldehyde 3-phosphate: step 1/5. This chain is Glyceraldehyde-3-phosphate dehydrogenase (gap), found in Methanothermobacter thermautotrophicus (strain ATCC 29096 / DSM 1053 / JCM 10044 / NBRC 100330 / Delta H) (Methanobacterium thermoautotrophicum).